The primary structure comprises 197 residues: Imidazoleglycerol-phosphate dehydratase (197 aa).

Belongs to the imidazoleglycerol-phosphate dehydratase family.

It localises to the cytoplasm. It carries out the reaction D-erythro-1-(imidazol-4-yl)glycerol 3-phosphate = 3-(imidazol-4-yl)-2-oxopropyl phosphate + H2O. It participates in amino-acid biosynthesis; L-histidine biosynthesis; L-histidine from 5-phospho-alpha-D-ribose 1-diphosphate: step 6/9. The polypeptide is Imidazoleglycerol-phosphate dehydratase (Pseudomonas putida (strain ATCC 700007 / DSM 6899 / JCM 31910 / BCRC 17059 / LMG 24140 / F1)).